We begin with the raw amino-acid sequence, 566 residues long: Membrane protein insertase YidC (566 aa).

A run of 5 helical transmembrane segments spans residues 3–23 (IKRI…FNAW), 346–366 (GWLW…HAVV), 369–389 (WGWS…WFSA), 436–456 (GGCL…YVII), and 509–529 (MWIL…GLVL).

The protein belongs to the OXA1/ALB3/YidC family. Type 1 subfamily. In terms of assembly, interacts with the Sec translocase complex via SecD. Specifically interacts with transmembrane segments of nascent integral membrane proteins during membrane integration.

It localises to the cell inner membrane. Required for the insertion and/or proper folding and/or complex formation of integral membrane proteins into the membrane. Involved in integration of membrane proteins that insert both dependently and independently of the Sec translocase complex, as well as at least some lipoproteins. Aids folding of multispanning membrane proteins. The polypeptide is Membrane protein insertase YidC (Coxiella burnetii (strain CbuK_Q154) (Coxiella burnetii (strain Q154))).